The sequence spans 874 residues: Alanine--tRNA ligase (874 aa).

Residues H562, H566, C664, and H668 each contribute to the Zn(2+) site.

The protein belongs to the class-II aminoacyl-tRNA synthetase family. Zn(2+) serves as cofactor.

Its subcellular location is the cytoplasm. It carries out the reaction tRNA(Ala) + L-alanine + ATP = L-alanyl-tRNA(Ala) + AMP + diphosphate. In terms of biological role, catalyzes the attachment of alanine to tRNA(Ala) in a two-step reaction: alanine is first activated by ATP to form Ala-AMP and then transferred to the acceptor end of tRNA(Ala). Also edits incorrectly charged Ser-tRNA(Ala) and Gly-tRNA(Ala) via its editing domain. The chain is Alanine--tRNA ligase from Shewanella woodyi (strain ATCC 51908 / MS32).